The sequence spans 80 residues: Ataxin-8 (80 aa).

In terms of tissue distribution, specifically found in brains from SCA8 patients (at protein level).

The protein resides in the nucleus. In Homo sapiens (Human), this protein is Ataxin-8 (ATXN8).